We begin with the raw amino-acid sequence, 156 residues long: Ribonuclease H (156 aa).

Positions 2-144 (SQFDVTVFTD…CDVLARAQAS (143 aa)) constitute an RNase H type-1 domain. Residues Asp11, Glu49, Asp71, and Asp136 each coordinate Mg(2+).

The protein belongs to the RNase H family. As to quaternary structure, monomer. The cofactor is Mg(2+).

The protein localises to the cytoplasm. It carries out the reaction Endonucleolytic cleavage to 5'-phosphomonoester.. Functionally, endonuclease that specifically degrades the RNA of RNA-DNA hybrids. The polypeptide is Ribonuclease H (Nitratidesulfovibrio vulgaris (strain ATCC 29579 / DSM 644 / CCUG 34227 / NCIMB 8303 / VKM B-1760 / Hildenborough) (Desulfovibrio vulgaris)).